A 231-amino-acid polypeptide reads, in one-letter code: Claudin-10 (231 aa).

The chain crosses the membrane as a helical span at residues 1–21 (MASTASEIIAFMVSISGWVLV). The Extracellular segment spans residues 22 to 80 (SSTLPTDYWKVSTIDGTVITTATYWANLWKTCVTDSTGVSNCKDFPSMLALDGYIQACR). Residues 81–101 (GLMIAAVSLGFFGSIFALIGM) traverse the membrane as a helical segment. The Cytoplasmic segment spans residues 102–115 (KCTKVGGSDKAKAK). A helical membrane pass occupies residues 116–136 (IACLAGIVFILSGLCSMTGCS). Topologically, residues 137-160 (LYANKITTEFFDPLFVEQKYELGA) are extracellular. The chain crosses the membrane as a helical span at residues 161–181 (ALFIGWAGASLCLIGGVIFCF). Topologically, residues 182–231 (SISDNNKAPRMGYTYNGATSVMSSRTKYHGREGDLKTPNPSKQFDKNAYV) are cytoplasmic.

Belongs to the claudin family. As to quaternary structure, can form homodimers both in trans (interaction between CLDN10 molecules in opposing membranes) and in cis (interaction between CLDN10 molecules within one membrane). Interacts with CLDN19.

The protein resides in the cell junction. It is found in the tight junction. The protein localises to the cell membrane. The enzyme catalyses Na(+)(in) = Na(+)(out). It catalyses the reaction Li(+)(in) = Li(+)(out). It carries out the reaction K(+)(in) = K(+)(out). The catalysed reaction is Rb(+)(in) = Rb(+)(out). The enzyme catalyses Cs(+)(in) = Cs(+)(out). It catalyses the reaction NH4(+)(in) = NH4(+)(out). It carries out the reaction methylamine(out) = methylamine(in). The catalysed reaction is Mg(2+)(in) = Mg(2+)(out). The enzyme catalyses Ca(2+)(in) = Ca(2+)(out). It catalyses the reaction Sr(2+)(in) = Sr(2+)(out). It carries out the reaction chloride(in) = chloride(out). The catalysed reaction is nitrate(in) = nitrate(out). Functionally, forms paracellular channels: polymerizes in tight junction strands with cation- and anion-selective channels through the strands, conveying epithelial permeability in a process known as paracellular tight junction permeability. In sweat glands and in the thick ascending limb (TAL) of Henle's loop in kidney, it controls paracellular sodium permeability which is essential for proper sweat production and renal function. In renal proximal tubules, it conveys selective chloride over hydrogencarbonate anion permeability which is required for renal chloride reabsorption and salt homeostasis. In Bos taurus (Bovine), this protein is Claudin-10 (CLDN10).